Consider the following 247-residue polypeptide: tRNA (guanine-N(1)-)-methyltransferase (247 aa).

S-adenosyl-L-methionine is bound by residues G117 and 136-141 (LGDFVL).

The protein belongs to the RNA methyltransferase TrmD family. In terms of assembly, homodimer.

Its subcellular location is the cytoplasm. It catalyses the reaction guanosine(37) in tRNA + S-adenosyl-L-methionine = N(1)-methylguanosine(37) in tRNA + S-adenosyl-L-homocysteine + H(+). Its function is as follows. Specifically methylates guanosine-37 in various tRNAs. This chain is tRNA (guanine-N(1)-)-methyltransferase, found in Myxococcus xanthus (strain DK1622).